We begin with the raw amino-acid sequence, 193 residues long: uncharacterized protein (193 aa).

Helical transmembrane passes span 8-28 (GVLVGGLWAWIAPPIHAVVAI), 46-66 (FFIAPFMLLGLLSVLAVVASA), 82-102 (GLSIGLTTAAAIAAGVGALVV), and 141-161 (IALTLMWPAGIASLVYALLAA).

It to M.leprae ML1222.

Its subcellular location is the cell membrane. This is an uncharacterized protein from Mycobacterium tuberculosis (strain CDC 1551 / Oshkosh).